The following is a 354-amino-acid chain: Peptide chain release factor 1 (354 aa).

Glutamine 230 carries the N5-methylglutamine modification.

It belongs to the prokaryotic/mitochondrial release factor family. Post-translationally, methylated by PrmC. Methylation increases the termination efficiency of RF1.

It localises to the cytoplasm. In terms of biological role, peptide chain release factor 1 directs the termination of translation in response to the peptide chain termination codons UAG and UAA. This is Peptide chain release factor 1 from Thermus thermophilus (strain ATCC BAA-163 / DSM 7039 / HB27).